The chain runs to 530 residues: Histone-arginine methyltransferase CARMER (530 aa).

The 310-residue stretch at 141 to 450 (ASQYFQFYGY…QSYDVTIDLH (310 aa)) folds into the SAM-dependent MTase PRMT-type domain. Q154, R163, G187, E209, E238, and T266 together coordinate S-adenosyl-L-methionine. The residue at position 501 (R501) is an Asymmetric dimethylarginine; by autocatalysis.

This sequence belongs to the class I-like SAM-binding methyltransferase superfamily. Protein arginine N-methyltransferase family. As to quaternary structure, homodimer. Post-translationally, the dimethylated protein is the major form.

Its subcellular location is the cytoplasm. It localises to the nucleus. It carries out the reaction L-arginyl-[protein] + 2 S-adenosyl-L-methionine = N(omega),N(omega)-dimethyl-L-arginyl-[protein] + 2 S-adenosyl-L-homocysteine + 2 H(+). Methylates (mono- and asymmetric dimethylation) the guanidino nitrogens of arginyl residues in proteins. May methylate histone H3 at 'Arg-17' and activate transcription via chromatin remodeling. The chain is Histone-arginine methyltransferase CARMER (Art4) from Drosophila sechellia (Fruit fly).